The following is a 274-amino-acid chain: Large ribosomal subunit protein uL2cz/uL2cy (274 aa).

2 disordered regions span residues 1–25 (MAIH…VKSN) and 224–274 (NPVD…RRSK).

The protein belongs to the universal ribosomal protein uL2 family. In terms of assembly, part of the 50S ribosomal subunit.

It is found in the plastid. The protein localises to the chloroplast. This chain is Large ribosomal subunit protein uL2cz/uL2cy (rpl2-A), found in Cucumis sativus (Cucumber).